Consider the following 474-residue polypeptide: 3-isopropylmalate dehydratase large subunit (474 aa).

The [4Fe-4S] cluster site is built by C353, C414, and C417.

The protein belongs to the aconitase/IPM isomerase family. LeuC type 1 subfamily. Heterodimer of LeuC and LeuD. [4Fe-4S] cluster is required as a cofactor.

The catalysed reaction is (2R,3S)-3-isopropylmalate = (2S)-2-isopropylmalate. It participates in amino-acid biosynthesis; L-leucine biosynthesis; L-leucine from 3-methyl-2-oxobutanoate: step 2/4. Its function is as follows. Catalyzes the isomerization between 2-isopropylmalate and 3-isopropylmalate, via the formation of 2-isopropylmaleate. The sequence is that of 3-isopropylmalate dehydratase large subunit from Xylella fastidiosa (strain M12).